Reading from the N-terminus, the 888-residue chain is MAETVELPSRLAILPFRNKVLLPGAIIRIRCTSHSSVTLVEQELWQKEEKGLIGILPVRDDAEGSSIGTMINPGAGSDSGERSLKFLVGTTDAQKSDAKDQQDLQWHTRGVAARALHLSRGVEKPSGRVTYVVVLEGLSRFNVQELGKRGPYSVARITSLEMTKAELEQVKQDPDFVALSRQFKTTAMELVSVLEQKQKTGGRTKVLLETVPIHKLADIFVASFEMSFEEQLSMLDSVDLKVRLSKATELVDRHLQSIRVAEKITQKVEGQLSKSQKEYLLRQQMRAIKEELGDNDDDEDDVAALERKMQAAGMPSNIWKHAQRELRRLKKMQPQQPGYNSSRVYLELLADLPWDKASEEHELDLKAAKERLDSDHYGLAKVKQRIIEYLAVRKLKPDARGPVLCFVGPPGVGKTSLASSIAAALGRKFVRLSLGGVKDEADIRGHRRTYIGSMPGRLIDGLKRVGVCNPVMLLDEIDKTGSDVRGDPASALLEVLDPEQNKSFNDHYLNVPYDLSKVVFVATANRVQPIPPPLLDRMELIELPGYTQEEKLKIAMRHLIPRVLDQHGLSSEFLKIPEAMVKNIIQRYTREAGVRSLERNLAALARAAAVMVAEHEQSLPLSKDVQKLTSPLLNGRMAEGGEVEMEVIPMGVNDHEIGGTFQSPSALVVDETMLEKILGPPRFDDSEAADRVASAGVSVGLVWTTFGGEVQFVEATSMVGKGEMHLTGQLGDVIKESAQLALTWVRARASDFKLALAGDMNVLDGRDIHIHFPAGAVPKDGPSAGVTLVTALVSLFSQKRVRADTAMTGEMTLRGLVLPVGGIKDKILAAHRYGIKRVILPQRNSKDLVEVPAAVLSSLEVILAKRMEDVLENAFEGGCPWRNNYSKL.

The Lon N-terminal domain occupies 11 to 255; that stretch reads LAILPFRNKV…KATELVDRHL (245 aa). 408–415 is an ATP binding site; sequence GPPGVGKT. Positions 692 to 877 constitute a Lon proteolytic domain; the sequence is VASAGVSVGL…EDVLENAFEG (186 aa). Active-site residues include S783 and K826. Residues 886-888 carry the Microbody targeting signal motif; sequence SKL.

It belongs to the peptidase S16 family.

The protein resides in the peroxisome matrix. The enzyme catalyses Hydrolysis of proteins in presence of ATP.. ATP-dependent serine protease that mediates the selective degradation of misfolded and unassembled polypeptides in the peroxisomal matrix. Necessary for type 2 peroxisome targeting signal (PTS2)-containing protein processing and facilitates peroxisome matrix protein import. The protein is Lon protease homolog 2, peroxisomal (LON2) of Arabidopsis thaliana (Mouse-ear cress).